The sequence spans 775 residues: Endothelin-converting enzyme-like 1 (775 aa).

The Cytoplasmic portion of the chain corresponds to 1–61 (MEAPYSMTAH…LPRWNRREVC (61 aa)). A disordered region spans residues 23–51 (CGTGGARGTSLPPGFPRSSGRSASGARSG). Over residues 32 to 51 (SLPPGFPRSSGRSASGARSG) the composition is skewed to low complexity. Residues 62–82 (LLSGLVFAAGLCAILAAMLAL) traverse the membrane as a helical; Signal-anchor for type II membrane protein segment. Over 83–775 (KYLGPGAAGT…MNPVHKCSVW (693 aa)) the chain is Lumenal. The 677-residue stretch at 99-775 (GCPERKAFAR…MNPVHKCSVW (677 aa)) folds into the Peptidase M13 domain. Cystine bridges form between C124–C760, C132–C720, C188–C441, and C649–C772. N-linked (GlcNAc...) asparagine glycans are attached at residues N255 and N322. Residue H612 coordinates Zn(2+). E613 is an active-site residue. H616 lines the Zn(2+) pocket. A glycan (N-linked (GlcNAc...) asparagine) is linked at N656. A Zn(2+)-binding site is contributed by E672. D676 serves as the catalytic Proton donor.

This sequence belongs to the peptidase M13 family. Zn(2+) serves as cofactor. In terms of tissue distribution, highly expressed in the CNS, in particular in neurons of the caudate putamen, diagonal band, the paraventricular nucleus of the thalamus, part of the hypothalamus, in cranial motor nuclei, inferior olive, and substantia gelatinosa of the spinal tract trigeminal nucleus. Not detected in cerebral cortex, hippocampus and cerebellum.

The protein resides in the membrane. Functionally, may contribute to the degradation of peptide hormones and be involved in the inactivation of neuronal peptides. Cleaves the synthetic substrate Z-Gly-Gly-Leu-pNA and releases pNA. May protect against C2-ceramide-induced apoptosis. In Rattus norvegicus (Rat), this protein is Endothelin-converting enzyme-like 1 (Ecel1).